The primary structure comprises 221 residues: Large ribosomal subunit protein uL16A (221 aa).

Belongs to the universal ribosomal protein uL16 family. Component of the large ribosomal subunit (LSU). Mature yeast ribosomes consist of a small (40S) and a large (60S) subunit. The 40S small subunit contains 1 molecule of ribosomal RNA (18S rRNA) and at least 33 different proteins. The large 60S subunit contains 3 rRNA molecules (25S, 5.8S and 5S rRNA) and at least 46 different proteins.

It localises to the cytoplasm. Component of the ribosome, a large ribonucleoprotein complex responsible for the synthesis of proteins in the cell. The small ribosomal subunit (SSU) binds messenger RNAs (mRNAs) and translates the encoded message by selecting cognate aminoacyl-transfer RNA (tRNA) molecules. The large subunit (LSU) contains the ribosomal catalytic site termed the peptidyl transferase center (PTC), which catalyzes the formation of peptide bonds, thereby polymerizing the amino acids delivered by tRNAs into a polypeptide chain. The nascent polypeptides leave the ribosome through a tunnel in the LSU and interact with protein factors that function in enzymatic processing, targeting, and the membrane insertion of nascent chains at the exit of the ribosomal tunnel. This Schizosaccharomyces pombe (strain 972 / ATCC 24843) (Fission yeast) protein is Large ribosomal subunit protein uL16A (rpl1001).